Consider the following 365-residue polypeptide: Anhydro-N-acetylmuramic acid kinase (365 aa).

12–19 (GTSMDGMD) contributes to the ATP binding site.

It belongs to the anhydro-N-acetylmuramic acid kinase family.

The enzyme catalyses 1,6-anhydro-N-acetyl-beta-muramate + ATP + H2O = N-acetyl-D-muramate 6-phosphate + ADP + H(+). It functions in the pathway amino-sugar metabolism; 1,6-anhydro-N-acetylmuramate degradation. Its pathway is cell wall biogenesis; peptidoglycan recycling. Its function is as follows. Catalyzes the specific phosphorylation of 1,6-anhydro-N-acetylmuramic acid (anhMurNAc) with the simultaneous cleavage of the 1,6-anhydro ring, generating MurNAc-6-P. Is required for the utilization of anhMurNAc either imported from the medium or derived from its own cell wall murein, and thus plays a role in cell wall recycling. The sequence is that of Anhydro-N-acetylmuramic acid kinase from Pseudomonas paraeruginosa (strain DSM 24068 / PA7) (Pseudomonas aeruginosa (strain PA7)).